The sequence spans 508 residues: Adenosine deaminase (508 aa).

A signal peptide spans 1 to 18; the sequence is MFSQLVVWLLATSTVCLA.

It belongs to the metallo-dependent hydrolases superfamily. Adenosine and AMP deaminases family. ADGF subfamily. Zn(2+) is required as a cofactor. Salivary gland (at protein level).

Its subcellular location is the secreted. It catalyses the reaction adenosine + H2O + H(+) = inosine + NH4(+). Catalyzes the deamination of adenosine to inosine. This Lutzomyia longipalpis (Sand fly) protein is Adenosine deaminase.